The following is a 124-amino-acid chain: Ubiquitin-related modifier 1 (124 aa).

The disordered stretch occupies residues 34–53 (IPSLVPKDNTTSAKNPPPKD). G124 is modified (1-thioglycine). Residue G124 forms a Glycyl lysine isopeptide (Gly-Lys) (interchain with K-? in acceptor proteins) linkage.

Belongs to the URM1 family. Post-translationally, C-terminal thiocarboxylation occurs in 2 steps, it is first acyl-adenylated (-COAMP) via the hesA/moeB/thiF part of UBA4, then thiocarboxylated (-COSH) via the rhodanese domain of UBA4.

Its subcellular location is the cytoplasm. It functions in the pathway tRNA modification; 5-methoxycarbonylmethyl-2-thiouridine-tRNA biosynthesis. Acts as a sulfur carrier required for 2-thiolation of mcm(5)S(2)U at tRNA wobble positions of cytosolic tRNA(Lys), tRNA(Glu) and tRNA(Gln). Serves as sulfur donor in tRNA 2-thiolation reaction by being thiocarboxylated (-COSH) at its C-terminus by the MOCS3 homolog UBA4. The sulfur is then transferred to tRNA to form 2-thiolation of mcm(5)S(2)U. Prior mcm(5) tRNA modification by the elongator complex is required for 2-thiolation. Also acts as a ubiquitin-like protein (UBL) that is covalently conjugated via an isopeptide bond to lysine residues of target proteins such as AHP1. The thiocarboxylated form serves as substrate for conjugation and oxidative stress specifically induces the formation of UBL-protein conjugates. The sequence is that of Ubiquitin-related modifier 1 from Coprinopsis cinerea (strain Okayama-7 / 130 / ATCC MYA-4618 / FGSC 9003) (Inky cap fungus).